The sequence spans 558 residues: Cyclomaltodextrinase (558 aa).

Residues Asn143, Gly168, and Asp170 each coordinate Ca(2+). Substrate contacts are provided by His243 and Arg323. The Nucleophile role is filled by Asp325. The active-site Proton donor is Glu354. Residues 420–421, Asp465, and Arg469 each bind substrate; that span reads HD.

The protein belongs to the glycosyl hydrolase 13 family. In terms of assembly, monomer. Depending on the pH of the solution, exists as a monomer, a homodimer or as an assembly of six homodimers forming a dodecamer, which is catalytically the most efficient form of the enzyme. Ca(2+) serves as cofactor.

The enzyme catalyses cyclomaltodextrin + H2O = linear maltodextrin. It carries out the reaction Hydrolysis of pullulan to panose (6-alpha-D-glucosylmaltose).. Hydrolysis of beta-cyclodextrin is inhibited by Cu(2+), Zn(2+) and Ag(+), and activated by Ca(2+), EGTA and EDTA. Activity is increased over twofold in the presence of 5 mM EDTA. Competitively inhibited by acarbose and methyl 6-amino-6-deoxy-alpha-D-glucopyranoside by reducing the rate of the ring opening step of the reaction. Its function is as follows. Hydrolyzes alpha-, beta- and gamma-cyclodextrins and the resulting linear maltodextrins, with the highest activity with beta-cyclodextrin (cyclomaltoheptaose). Soluble starch is hydrolyzed slowly, but it is nevertheless preferred over pullulan as a substrate. Is able to hydrolyze amylose and amylopectin, with a very strong preference for amylose, with maltose and glucose as the main products. Maltose and glucose are the main hydrolysis products of cyclomaltodextrins, maltodextrins and starch, whereas panose is the main hydrolysis product of pullulan. Acarbose is partially hydrolyzed to glucose and pseudotrisaccharide. No activity with maltose as substrate. Has transglycosylating activity with high concentrations of maltotriose, maltotetraose and starch. The polypeptide is Cyclomaltodextrinase (Bacillus sp).